The following is a 68-amino-acid chain: Glu S.griseus protease inhibitor (68 aa).

Residue Ser-1 is modified to N-acetylserine. Cys-3 and Cys-48 form a disulfide bridge.

Belongs to the protease inhibitor I13 (potato type I serine protease inhibitor) family.

Competitively inhibits Glu S.griseus protease by forming probably a 1:1 complex. BGIA has no inhibitory activity against 2 other acidic amino acid-specific endopeptidases (S.aureus protease V8 and B.subtilis proteinase), chymotrypsin, trypsin, pancreatic elastase, and papain, although subtilisin Carlsberg was strongly inhibited. The polypeptide is Glu S.griseus protease inhibitor (Momordica charantia (Bitter gourd)).